A 48-amino-acid polypeptide reads, in one-letter code: ATP synthase protein 8 (48 aa).

Residue M1 is modified to N-formylmethionine. Topologically, residues 1-12 (MPQLVPFYFTNQ) are mitochondrial intermembrane. The helical transmembrane segment at 13–32 (IFYGFASLSVIVYLFSIYIL) threads the bilayer. At 33–48 (PHYLEIYVTRIFITKT) the chain is on the mitochondrial matrix side.

In terms of assembly, F-type ATP synthases have 2 components, the catalytic core F(1) and the membrane-embedded component F(0), linked together by a central stalk and a peripheral stalk. The central stalk, also called rotor shaft, is often seen as part of F(1). The peripheral stalk is seen as part of F(0). F(0) contains the membrane channel next to the rotor. F-type ATP synthases form dimers but each monomer functions independently in ATP generation. The dimer consists of 17 different polypeptides: ATP1 (subunit alpha, 3 molecules per monomer, part of F(1)), ATP2 (subunit beta, 3 copies per monomer, part of F(1)), ATP3 (subunit gamma, part of the central stalk), ATP4 (subunit b, part of the peripheral stalk), ATP5/OSCP (subunit 5/OSCP, part of the peripheral stalk), ATP6 (subunit a, part of the peripheral stalk), ATP7 (subunit d, part of the peripheral stalk), ATP8 (subunit 8, part of the peripheral stalk), OLI1 (subunit c, part of the rotor, 10 molecules per monomer), ATP14 (subunit h, part of the peripheral stalk), ATP15 (subunit epsilon, part of the central stalk), ATP16 (subunit delta, part of the central stalk), ATP17 (subunit f, part of the peripheral stalk), ATP18 (subunit i/j, part of the peripheral stalk), ATP19 (subunit k, dimer-specific, at interface between monomers), ATP20 (subunit g, at interface between monomers), TIM11 (subunit e, at interface between monomers).

It is found in the mitochondrion inner membrane. Functionally, mitochondrial membrane ATP synthase (F(1)F(0) ATP synthase or Complex V) produces ATP from ADP in the presence of a proton gradient across the membrane which is generated by electron transport complexes of the respiratory chain. F-type ATP synthases consist of two structural domains, F(1) - containing the extramembraneous catalytic core, and F(0) - containing the membrane proton channel, linked together by a central stalk and a peripheral stalk. During catalysis, ATP synthesis in the catalytic domain of F(1) is coupled via a rotary mechanism of the central stalk subunits to proton translocation. Part of the complex F(0) domain. Minor subunit located with subunit a/ATP6 in the membrane. This Yarrowia lipolytica (strain CLIB 122 / E 150) (Yeast) protein is ATP synthase protein 8.